Reading from the N-terminus, the 341-residue chain is Phosphate acyltransferase (341 aa).

Belongs to the PlsX family. As to quaternary structure, homodimer. Probably interacts with PlsY.

Its subcellular location is the cytoplasm. The catalysed reaction is a fatty acyl-[ACP] + phosphate = an acyl phosphate + holo-[ACP]. Its pathway is lipid metabolism; phospholipid metabolism. In terms of biological role, catalyzes the reversible formation of acyl-phosphate (acyl-PO(4)) from acyl-[acyl-carrier-protein] (acyl-ACP). This enzyme utilizes acyl-ACP as fatty acyl donor, but not acyl-CoA. This is Phosphate acyltransferase from Aliivibrio fischeri (strain ATCC 700601 / ES114) (Vibrio fischeri).